Consider the following 334-residue polypeptide: Ornithine carbamoyltransferase (334 aa).

Carbamoyl phosphate is bound by residues 56 to 59 (STRT), glutamine 83, arginine 107, and 134 to 137 (HPTQ). L-ornithine contacts are provided by residues asparagine 168, aspartate 232, and 236-237 (SM). Carbamoyl phosphate contacts are provided by residues 274 to 275 (CL) and arginine 320.

The protein belongs to the aspartate/ornithine carbamoyltransferase superfamily. OTCase family.

The protein localises to the cytoplasm. The enzyme catalyses carbamoyl phosphate + L-ornithine = L-citrulline + phosphate + H(+). It participates in amino-acid biosynthesis; L-arginine biosynthesis; L-arginine from L-ornithine and carbamoyl phosphate: step 1/3. Functionally, reversibly catalyzes the transfer of the carbamoyl group from carbamoyl phosphate (CP) to the N(epsilon) atom of ornithine (ORN) to produce L-citrulline. The chain is Ornithine carbamoyltransferase from Escherichia coli O157:H7.